The sequence spans 512 residues: PTS system mannitol-specific EIICB component (512 aa).

The Cytoplasmic segment spans residues 1 to 28 (MSQTEEKKGIGRRVQAFGSFLSSMIMPN). Positions 17 to 349 (FGSFLSSMIM…MKFTREPKQD (333 aa)) constitute a PTS EIIC type-2 domain. The chain crosses the membrane as a helical span at residues 29–50 (IGAFIAWGFIAAIFIDNGWLPN). Residues 51 to 54 (KDLA) are Extracellular-facing. The helical transmembrane segment at 55–75 (TLAGPMITYLIPLLIAFSGGR) threads the bilayer. At 76 to 139 (LIYDLRGGII…QGFEMLFNNF (64 aa)) the chain is on the cytoplasmic side. A helical membrane pass occupies residues 140–161 (SAGILGFIMTIAGFKILAPLMK). Over 162–170 (FIMHILSVA) the chain is Extracellular. Residues 171–191 (VEALVHAHLLPLVSILVEPAK) traverse the membrane as a helical segment. At 192-278 (IVFLNNAINH…VLMRPLLFIA (87 aa)) the chain is on the cytoplasmic side. The chain crosses the membrane as a helical span at residues 279 to 298 (VILGGMTGVATYQATGFGFK). At 299 to 318 (SPASPGSFIVYCLNAPRGEF) the chain is on the extracellular side. A helical transmembrane segment spans residues 319 to 340 (LHMLLGVFLAALVSFVVAALIM). Over 341–512 (KFTREPKQDL…LNNLKKDDQA (172 aa)) the chain is Cytoplasmic. The interval 355 to 402 (AQMENTKGKKSSVASKLVSSDKNVNTEENASGNVSETSSSDDDPEALL) is disordered. The segment covering 365–376 (SSVASKLVSSDK) has biased composition (low complexity). Residues 380-392 (TEENASGNVSETS) show a composition bias toward polar residues. Positions 419 to 512 (NHVIFACDAG…LNNLKKDDQA (94 aa)) constitute a PTS EIIB type-2 domain. Residue Cys425 is the Phosphocysteine intermediate; for EIIB activity of the active site. Cys425 carries the phosphocysteine; by EIIA modification.

In terms of assembly, homodimer.

It is found in the cell membrane. The catalysed reaction is D-mannitol(out) + N(pros)-phospho-L-histidyl-[protein] = D-mannitol 1-phosphate(in) + L-histidyl-[protein]. In terms of biological role, the phosphoenolpyruvate-dependent sugar phosphotransferase system (sugar PTS), a major carbohydrate active transport system, catalyzes the phosphorylation of incoming sugar substrates concomitantly with their translocation across the cell membrane. The enzyme II CmtAB PTS system is involved in D-mannitol transport. This chain is PTS system mannitol-specific EIICB component (mtlA), found in Staphylococcus aureus (strain Mu50 / ATCC 700699).